The primary structure comprises 1006 residues: UPF0182 protein Arth_2749 (1006 aa).

Transmembrane regions (helical) follow at residues 18 to 38 (GALT…IFFA), 64 to 84 (IIIF…AIRI), 115 to 135 (VVMI…AASQ), 168 to 188 (FLGF…IAGI), 211 to 231 (QIHL…NFWL), 260 to 280 (SILA…AVIG), and 287 to 307 (IGTA…PWVI). Disordered regions lie at residues 490-519 (GAPE…FTGN), 896-923 (KAGD…GGTD), and 975-1006 (LGSE…SPSN). Positions 495–509 (SPHREQDRPAGKEGD) are enriched in basic and acidic residues. Composition is skewed to low complexity over residues 911 to 923 (AGGS…GGTD) and 979 to 1000 (GASP…AATP).

This sequence belongs to the UPF0182 family.

The protein localises to the cell membrane. In Arthrobacter sp. (strain FB24), this protein is UPF0182 protein Arth_2749.